Reading from the N-terminus, the 195-residue chain is 3-isopropylmalate dehydratase small subunit (195 aa).

It belongs to the LeuD family. LeuD type 1 subfamily. Heterodimer of LeuC and LeuD.

It catalyses the reaction (2R,3S)-3-isopropylmalate = (2S)-2-isopropylmalate. It functions in the pathway amino-acid biosynthesis; L-leucine biosynthesis; L-leucine from 3-methyl-2-oxobutanoate: step 2/4. Functionally, catalyzes the isomerization between 2-isopropylmalate and 3-isopropylmalate, via the formation of 2-isopropylmaleate. In Karelsulcia muelleri (strain GWSS) (Sulcia muelleri), this protein is 3-isopropylmalate dehydratase small subunit.